A 288-amino-acid polypeptide reads, in one-letter code: Pirin-like protein CC_3178 (288 aa).

It belongs to the pirin family.

This is Pirin-like protein CC_3178 from Caulobacter vibrioides (strain ATCC 19089 / CIP 103742 / CB 15) (Caulobacter crescentus).